A 126-amino-acid chain; its full sequence is Cornifin alpha (126 aa).

Serine 2 carries the N-acetylserine modification. Tandem repeats lie at residues 3–14 (SQQQKQPCTLPP), 18–29 (QHQVKQPCQPPP), 31–38 (EPCVPKTK), 39–46 (EPCQPKVP), 47–54 (EPCQPKVP), 55–62 (EPCQPKVP), 63–70 (EPCQPKVP), 71–78 (QPCQPKVP), 79–86 (EPCQPKVP), 87–94 (EPCQPKVP), 95–102 (EPCQPKVP), 103–110 (EPCQSKVP), and 111–118 (QPCQPKVP). The interval 3-29 (SQQQKQPCTLPPQLQQHQVKQPCQPPP) is 2 X 12 AA approximate repeats. The segment at 20 to 43 (QVKQPCQPPPQEPCVPKTKEPCQP) is disordered. The segment at 31 to 122 (EPCVPKTKEP…CQPKVPEPCQ (92 aa)) is 11 X 8 AA approximate tandem repeats. A disordered region spans residues 104–126 (PCQSKVPQPCQPKVPEPCQTKQK).

Belongs to the cornifin (SPRR) family. Suprabasal layers of squamous-differentiated tissues such as epidermis, esophagus, tongue and trachea.

Its subcellular location is the cytoplasm. In terms of biological role, cross-linked envelope protein of keratinocytes. It is a keratinocyte protein that first appears in the cell cytosol, but ultimately becomes cross-linked to membrane proteins by transglutaminase. All that results in the formation of an insoluble envelope beneath the plasma membrane. In Oryctolagus cuniculus (Rabbit), this protein is Cornifin alpha.